We begin with the raw amino-acid sequence, 107 residues long: Nucleoid-associated protein Atu0095 (107 aa).

Positions Lys-81–Phe-107 are disordered. The span at Pro-98 to Phe-107 shows a compositional bias: pro residues.

It belongs to the YbaB/EbfC family. Homodimer.

It is found in the cytoplasm. It localises to the nucleoid. Functionally, binds to DNA and alters its conformation. May be involved in regulation of gene expression, nucleoid organization and DNA protection. The sequence is that of Nucleoid-associated protein Atu0095 from Agrobacterium fabrum (strain C58 / ATCC 33970) (Agrobacterium tumefaciens (strain C58)).